We begin with the raw amino-acid sequence, 271 residues long: Fork head domain-containing protein FD5 (271 aa).

Positions 12 to 103 form a DNA-binding region, fork-head; the sequence is QKPPYSYISL…FDMFENGSLL (92 aa).

In terms of tissue distribution, expressed in early embryogenesis in 14 symmetrical pairs of segmentally arranged neuroblasts and in developing peripheral nervous system. Also, later in embryogenesis, in a cluster of cells in head region.

The protein resides in the nucleus. In terms of biological role, involved in development during embryogenesis. This Drosophila melanogaster (Fruit fly) protein is Fork head domain-containing protein FD5 (fd96Cb).